A 99-amino-acid polypeptide reads, in one-letter code: Putative pterin-4-alpha-carbinolamine dehydratase (99 aa).

The protein belongs to the pterin-4-alpha-carbinolamine dehydratase family.

It carries out the reaction (4aS,6R)-4a-hydroxy-L-erythro-5,6,7,8-tetrahydrobiopterin = (6R)-L-erythro-6,7-dihydrobiopterin + H2O. The protein is Putative pterin-4-alpha-carbinolamine dehydratase of Saccharolobus islandicus (strain M.16.27) (Sulfolobus islandicus).